We begin with the raw amino-acid sequence, 164 residues long: Thiol peroxidase (164 aa).

The Thioredoxin domain occupies 18–163 (VSEGQHAPDF…FDAALEAYRN (146 aa)). Cys-60 (cysteine sulfenic acid (-SOH) intermediate) is an active-site residue. A disulfide bond links Cys-60 and Cys-93.

This sequence belongs to the peroxiredoxin family. Tpx subfamily. As to quaternary structure, homodimer.

It catalyses the reaction a hydroperoxide + [thioredoxin]-dithiol = an alcohol + [thioredoxin]-disulfide + H2O. Thiol-specific peroxidase that catalyzes the reduction of hydrogen peroxide and organic hydroperoxides to water and alcohols, respectively. Plays a role in cell protection against oxidative stress by detoxifying peroxides. The sequence is that of Thiol peroxidase from Staphylococcus haemolyticus (strain JCSC1435).